A 99-amino-acid chain; its full sequence is Integration host factor subunit alpha (99 aa).

The disordered stretch occupies residues 49–75; that stretch reads FGNFDLRDKNQRPGRNPKTGEDIPITA.

It belongs to the bacterial histone-like protein family. Heterodimer of an alpha and a beta chain.

In terms of biological role, this protein is one of the two subunits of integration host factor, a specific DNA-binding protein that functions in genetic recombination as well as in transcriptional and translational control. The polypeptide is Integration host factor subunit alpha (Klebsiella pneumoniae (strain 342)).